Here is a 154-residue protein sequence, read N- to C-terminus: Superoxide dismutase [Cu-Zn] (154 aa).

Cu cation-binding residues include His-47, His-49, and His-64. Cys-58 and Cys-147 are disulfide-bonded. Zn(2+)-binding residues include His-64, His-72, His-81, and Asp-84. His-121 is a Cu cation binding site.

Belongs to the Cu-Zn superoxide dismutase family. In terms of assembly, homodimer. Cu cation serves as cofactor. The cofactor is Zn(2+).

It localises to the cytoplasm. The catalysed reaction is 2 superoxide + 2 H(+) = H2O2 + O2. Destroys radicals which are normally produced within the cells and which are toxic to biological systems. This Pinus sylvestris (Scotch pine) protein is Superoxide dismutase [Cu-Zn] (SODCC).